The following is a 289-amino-acid chain: Acetyl-coenzyme A carboxylase carboxyl transferase subunit beta (289 aa).

The 256-residue stretch at Met-34 to Phe-289 folds into the CoA carboxyltransferase N-terminal domain. 4 residues coordinate Zn(2+): Cys-38, Cys-41, Cys-57, and Cys-60. A C4-type zinc finger spans residues Cys-38–Cys-60.

This sequence belongs to the AccD/PCCB family. As to quaternary structure, acetyl-CoA carboxylase is a heterohexamer composed of biotin carboxyl carrier protein (AccB), biotin carboxylase (AccC) and two subunits each of ACCase subunit alpha (AccA) and ACCase subunit beta (AccD). Requires Zn(2+) as cofactor.

Its subcellular location is the cytoplasm. It carries out the reaction N(6)-carboxybiotinyl-L-lysyl-[protein] + acetyl-CoA = N(6)-biotinyl-L-lysyl-[protein] + malonyl-CoA. It participates in lipid metabolism; malonyl-CoA biosynthesis; malonyl-CoA from acetyl-CoA: step 1/1. Functionally, component of the acetyl coenzyme A carboxylase (ACC) complex. Biotin carboxylase (BC) catalyzes the carboxylation of biotin on its carrier protein (BCCP) and then the CO(2) group is transferred by the transcarboxylase to acetyl-CoA to form malonyl-CoA. This is Acetyl-coenzyme A carboxylase carboxyl transferase subunit beta from Clostridium botulinum (strain Loch Maree / Type A3).